A 501-amino-acid chain; its full sequence is MSSPAQPAVPAPLANLKIQHTKIFINNEWHNSLNGKKFPVINPATEEVICHVEEGDKADVDKAVKAARQAFQIGSPWRTMDASERGCLLNKLADLMERDRVLLATMESMNAGKIFTHAYLLDTEVSIKALKYFAGWADKIHGQTIPSDGDVFTYTRREPIGVCGQIIPWNGPLILFIWKIGAALSCGNTVIVKPAEQTPLTALYMASLIKEAGFPPGVVNVVPGYGSTAGAAISSHMDIDKVSFTGSTEVGKLIKEAAGKSNLKRVTLELGGKSPCIVFADADLDSAVEFAHQGVFFHQGQICVAASRLFVEESIYDEFVRRSVERAKKYVLGNPLDSGISQGPQIDKEQHAKILDLIESGKKEGAKLECGGGRWGNKGFFVQPTVFSNVTDEMRIAKEEIFGPVQQIMKFKSIDEVIKRANNTPYGLAAGVFTKDLDRAITVSSALQAGTVWVNCYLTLSVQCPFGGFKMSGNGREMGEQGVYEYTELKTVAMKISQKNS.

An N-acetylserine modification is found at serine 2. Lysine 91 and lysine 128 each carry N6-acetyllysine. 246 to 251 (GSTEVG) is an NAD(+) binding site. The residue at position 252 (lysine 252) is an N6-acetyllysine. Glutamate 269 acts as the Proton acceptor in catalysis. The Nucleophile role is filled by cysteine 303. 3 positions are modified to N6-acetyllysine: lysine 353, lysine 367, and lysine 410. At serine 413 the chain carries Phosphoserine. Residues lysine 419, lysine 435, and lysine 495 each carry the N6-acetyllysine modification.

The protein belongs to the aldehyde dehydrogenase family. As to quaternary structure, homotetramer. As to expression, very low levels in lung and liver.

The protein resides in the cytoplasm. It carries out the reaction an aldehyde + NAD(+) + H2O = a carboxylate + NADH + 2 H(+). It participates in alcohol metabolism; ethanol degradation; acetate from ethanol: step 2/2. Functionally, can oxidize benzaldehyde, propionaldehyde and acetaldehyde. No detectable activity with retinal. This Rattus norvegicus (Rat) protein is Aldehyde dehydrogenase, cytosolic 1 (Aldh1a7).